A 188-amino-acid polypeptide reads, in one-letter code: UPF0314 protein Sala_3154 (188 aa).

The next 3 membrane-spanning stretches (helical) occupy residues Thr8–Gly28, Trp57–Met77, and Met143–Ile163.

This sequence belongs to the UPF0314 family.

It localises to the cell membrane. The protein is UPF0314 protein Sala_3154 of Sphingopyxis alaskensis (strain DSM 13593 / LMG 18877 / RB2256) (Sphingomonas alaskensis).